The sequence spans 348 residues: Phenylalanine--tRNA ligase alpha subunit (348 aa).

Glu268 provides a ligand contact to Mg(2+).

Belongs to the class-II aminoacyl-tRNA synthetase family. Phe-tRNA synthetase alpha subunit type 1 subfamily. In terms of assembly, tetramer of two alpha and two beta subunits. It depends on Mg(2+) as a cofactor.

It is found in the cytoplasm. The enzyme catalyses tRNA(Phe) + L-phenylalanine + ATP = L-phenylalanyl-tRNA(Phe) + AMP + diphosphate + H(+). This chain is Phenylalanine--tRNA ligase alpha subunit, found in Bordetella bronchiseptica (strain ATCC BAA-588 / NCTC 13252 / RB50) (Alcaligenes bronchisepticus).